The primary structure comprises 376 residues: Queuine tRNA-ribosyltransferase (376 aa).

Aspartate 93 functions as the Proton acceptor in the catalytic mechanism. Residues 93-97 (DSGGF), aspartate 147, glutamine 190, and glycine 217 contribute to the substrate site. The segment at 248–254 (GVGKPDD) is RNA binding. Aspartate 267 acts as the Nucleophile in catalysis. Residues cysteine 305, cysteine 307, cysteine 310, and histidine 336 each contribute to the Zn(2+) site.

It belongs to the queuine tRNA-ribosyltransferase family. Homodimer. Within each dimer, one monomer is responsible for RNA recognition and catalysis, while the other monomer binds to the replacement base PreQ1. Requires Zn(2+) as cofactor.

It catalyses the reaction 7-aminomethyl-7-carbaguanine + guanosine(34) in tRNA = 7-aminomethyl-7-carbaguanosine(34) in tRNA + guanine. It functions in the pathway tRNA modification; tRNA-queuosine biosynthesis. Its function is as follows. Catalyzes the base-exchange of a guanine (G) residue with the queuine precursor 7-aminomethyl-7-deazaguanine (PreQ1) at position 34 (anticodon wobble position) in tRNAs with GU(N) anticodons (tRNA-Asp, -Asn, -His and -Tyr). Catalysis occurs through a double-displacement mechanism. The nucleophile active site attacks the C1' of nucleotide 34 to detach the guanine base from the RNA, forming a covalent enzyme-RNA intermediate. The proton acceptor active site deprotonates the incoming PreQ1, allowing a nucleophilic attack on the C1' of the ribose to form the product. After dissociation, two additional enzymatic reactions on the tRNA convert PreQ1 to queuine (Q), resulting in the hypermodified nucleoside queuosine (7-(((4,5-cis-dihydroxy-2-cyclopenten-1-yl)amino)methyl)-7-deazaguanosine). The sequence is that of Queuine tRNA-ribosyltransferase from Jannaschia sp. (strain CCS1).